The following is a 447-amino-acid chain: N-succinylarginine dihydrolase (447 aa).

Substrate is bound by residues 19 to 28 (AGLSFGNEAS), asparagine 110, and 137 to 138 (HR). Glutamate 174 is an active-site residue. Arginine 212 serves as a coordination point for substrate. Residue histidine 248 is part of the active site. The substrate site is built by aspartate 250 and asparagine 359. The active-site Nucleophile is cysteine 365.

It belongs to the succinylarginine dihydrolase family. As to quaternary structure, homodimer.

The enzyme catalyses N(2)-succinyl-L-arginine + 2 H2O + 2 H(+) = N(2)-succinyl-L-ornithine + 2 NH4(+) + CO2. It participates in amino-acid degradation; L-arginine degradation via AST pathway; L-glutamate and succinate from L-arginine: step 2/5. In terms of biological role, catalyzes the hydrolysis of N(2)-succinylarginine into N(2)-succinylornithine, ammonia and CO(2). The sequence is that of N-succinylarginine dihydrolase from Salmonella paratyphi B (strain ATCC BAA-1250 / SPB7).